We begin with the raw amino-acid sequence, 605 residues long: F-box/WD repeat-containing protein 1A (605 aa).

The interval 128 to 177 (ASYEKEKELCVKYFEQWSESDQVEFVEHLISQMCHYQHGHINSYLKPMLQ) is homodimerization domain D. An F-box domain is found at 182-228 (TALPARGLDHIAENILSYLDAKSLCAAELVCKEWYRVTSDGMLWKKL). Residues 190–228 (DHIAENILSYLDAKSLCAAELVCKEWYRVTSDGMLWKKL) form a required for down-regulation of SNAI1 region. WD repeat units lie at residues 301-338 (ETSK…CKRI), 341-378 (GHTG…MLNT), 381-418 (HHCE…DITL), 424-461 (GHRA…FVRT), 464-503 (GHKR…RVLE), 505-541 (HEEL…DPRA), and 553-590 (EHSG…AAHA).

As to quaternary structure, homodimer. Self-associates. Component of the SCF(BTRC) complex, composed of SKP1, CUL1 and BTRC. Direct interaction with SKP1 with SKP1 occurs via the F-box domain. Interacts with phosphorylated ubiquitination substrates SMAD3 and SMAD4. Interacts with phosphorylated ubiquitination substrates CTNNB1, NFKBIA, NFKBIB, NFKBIE, NFKB1/nuclear factor NF-kappa-B p105 subunit, ATF4, CDC25A, DLG1, FBXO5 and SNAI1; the interaction requires the phosphorylation of the 2 serine residues in the substrate destruction motif D-S-G-X(2,3,4)-S. Binds UBQLN1. Interacts with CDC34 and UBE2R2. Interacts with FBXW11. Interacts with CUL4A and DDB1. Part of a SCF(BTRC)-like complex lacking CUL1, which is associated with phosphorylated NKBIA and RELA; RELA interacts directly with NFKBIA. Interacts with the phosphorylated form of GLI3. Interacts with CLU. Interacts with PER1 (phosphorylated), PER2 (phosphorylated) and PER3. Interacts with phosphorylated ubiquitination substrate CEP68. Interacts with ZC3H12A; this interaction occurs when ZC3H12A is phosphorylated in a IKBKB/IKKB-dependent manner. Interacts with HSF1; this interaction occurs during mitosis and induces HSF1 ubiquitin-dependent degradation, a process inhibited by CDC20. Interacts with NFE2L1. Interacts with INAVA. Interacts with IL10RA; this interaction leads to IL10RA ubiquitination and subsequent degradation. Interacts with REST. Interacts with KLF4; this interaction leads to KLF4 ubiquitination and subsequent degradation. Interacts with UBR2, as part of a SCF(BTRC) complex; the interaction mediates 'Lys-48'-linked ubiquitination of UBR2 and is regulated by DUSP22 in the T-cell receptor signaling pathway. Post-translationally, ubiquitinated via 'Lys-11'-linked polyubiquitin by some cullin-5-RING E3 ubiquitin-protein ligase complex (ECS complex), leading to its degradation. Deubiquitinated by OTUD5, promoting its stability. As to expression, expressed in heart, brain, liver, skeletal muscle and, most strongly, in testis.

The protein localises to the cytoplasm. It localises to the nucleus. Its pathway is protein modification; protein ubiquitination. In terms of biological role, substrate recognition component of a SCF (SKP1-CUL1-F-box protein) E3 ubiquitin-protein ligase complex which mediates the ubiquitination and subsequent proteasomal degradation of target proteins. Recognizes and binds to phosphorylated target proteins. SCF(BTRC) mediates the ubiquitination of phosphorylated NFKB, ATF4, CDC25A, DLG1, FBXO5, PER1, SMAD3, SMAD4, SNAI1 and probably NFKB2. SCF(BTRC) mediates the ubiquitination of CTNNB1 and participates in Wnt signaling. SCF(BTRC) mediates the ubiquitination of NFKBIA, NFKBIB and NFKBIE; the degradation frees the associated NFKB1 to translocate into the nucleus and to activate transcription. Ubiquitination of NFKBIA occurs at 'Lys-21' and 'Lys-22'. The SCF(FBXW11) complex also regulates NF-kappa-B by mediating ubiquitination of phosphorylated NFKB1: specifically ubiquitinates the p105 form of NFKB1, leading to its degradation. SCF(BTRC) mediates the ubiquitination of CEP68; this is required for centriole separation during mitosis. SCF(BTRC) mediates the ubiquitination and subsequent degradation of nuclear NFE2L1. Has an essential role in the control of the clock-dependent transcription via degradation of phosphorylated PER1 and PER2. May be involved in ubiquitination and subsequent proteasomal degradation through a DBB1-CUL4 E3 ubiquitin-protein ligase. Required for activation of NFKB-mediated transcription by IL1B, MAP3K14, MAP3K1, IKBKB and TNF. Required for proteolytic processing of GLI3. Mediates ubiquitination of REST, thereby leading to its proteasomal degradation. SCF(BTRC) mediates the ubiquitination and subsequent proteasomal degradation of KLF4; thereby negatively regulating cell pluripotency maintenance and embryogenesis. SCF(BTRC) acts as a regulator of mTORC1 signaling pathway by catalyzing ubiquitination and subsequent proteasomal degradation of phosphorylated DEPTOR, TFE3 and MITF. SCF(BTRC) directs 'Lys-48'-linked ubiquitination of UBR2 in the T-cell receptor signaling pathway. The chain is F-box/WD repeat-containing protein 1A from Mus musculus (Mouse).